Here is a 384-residue protein sequence, read N- to C-terminus: Monomethylxanthine methyltransferase 2 (384 aa).

Positions 18, 61, 66, 100, 101, 139, 140, and 156 each coordinate S-adenosyl-L-homocysteine. Positions 157, 160, and 161 each coordinate theobromine. Mg(2+)-binding residues include Asn178, Phe262, and Asn263. Position 368 (Tyr368) interacts with theobromine.

It belongs to the methyltransferase superfamily. Type-7 methyltransferase family. It depends on Mg(2+) as a cofactor. As to expression, expressed, at low levels, in young leaves, floral buds and immature fruits (grains), but not in old leaves and mature fruits. Highly expressed in developing endosperm and flower buds. Detected in young leaves.

It catalyses the reaction 7-methylxanthine + S-adenosyl-L-methionine = theobromine + S-adenosyl-L-homocysteine + H(+). It functions in the pathway alkaloid biosynthesis. Functionally, involved in the biosynthesis of caffeine. Catalyzes the conversion of 7-methylxanthine (7mX) to theobromine and with a lower activity of paraxanthine to caffeine. Does not have 1-N-methylation activity. This chain is Monomethylxanthine methyltransferase 2, found in Coffea arabica (Arabian coffee).